Consider the following 482-residue polypeptide: Isoxanthopterin deaminase (482 aa).

Residues His74 and His76 each coordinate Zn(2+). Gln79 is a binding site for substrate. His246 is a Zn(2+) binding site. Glu249 and His283 together coordinate substrate. Positions 283 and 334 each coordinate Zn(2+).

The protein belongs to the metallo-dependent hydrolases superfamily. ATZ/TRZ family. Zn(2+) is required as a cofactor.

The enzyme catalyses a 2-amino-4-hydroxypteridine + H2O + H(+) = a 2,4-dihydroxypteridine + NH4(+). In Unknown prokaryotic organism, this protein is Isoxanthopterin deaminase.